A 517-amino-acid polypeptide reads, in one-letter code: Nucleoside transporter FUN26 (517 aa).

The tract at residues 1-63 (MSTSADTDTI…EREQSVSTEP (63 aa)) is disordered. Residues 25-44 (THSEEISRSGEEHESENNEH) show a composition bias toward basic and acidic residues. Phosphoserine is present on residues serine 45 and serine 58. 11 consecutive transmembrane segments (helical) span residues 76–96 (LSYI…NCIL), 116–136 (IFTS…NIYL), 151–171 (LVWE…HFLL), 174–194 (WFNF…TAMT), 214–234 (MVGQ…LAFI), 243–263 (GGIL…VVMF), 344–364 (LVLS…FASA), 367–387 (VTGL…LWNL), 411–431 (TFIY…FTAI), 446–466 (IVDL…GHVI), and 492–512 (IFVS…VFII).

It belongs to the SLC29A/ENT transporter (TC 2.A.57) family.

The protein localises to the membrane. Its function is as follows. Has broad nucleoside selectivity (uridine, adenosine and cytidine) and most likely functions to transport nucleosides across intracellular membranes. The polypeptide is Nucleoside transporter FUN26 (FUN26) (Saccharomyces cerevisiae (strain ATCC 204508 / S288c) (Baker's yeast)).